The sequence spans 570 residues: MNSIKNGFFLCMIFLLWCHVDSGVSIDPFSHSHSLNTECVMKPPRSSETKGLLQFSRSLEDDSDEEWKIDGNGFIREMAQRIQLHQGNIYSFSAWVKLREGNDKKVGVVFRTENGRLVHGGEVRANQECWTLLKGGIVPDFSGPVDIFFESENRGAKISAHNVLLKQFSKEEWKLKQDQLIEKIRKSKVRFEVTYENKTAVKGVVISLKQTKSSFLLGCGMNFRILQSQGYRKWFASRFKITSFTNEMKWYATEKARGQENYTVADSMLKFAEDNGILVRGHTVLWDNPKMQPSWVKNIKDPNDVMNVTLNRINSVMKRYKGKLTGWDVVNENLHWDYFEKMLGANASTSFYNLAFKIDPDVRLFVNEYNTIENTKEFTATPIKVKKMMEEILAYPGNKNMKGAIGAQGHFGPTQPNLAYIRSALDTLGSLGLPIWLTEVDMPKCPNQAQYVEDILREAYSHPAVKGIIIFGGPEVSGFDKLTLADKDFNNTQTGDVIDKLLKEWQQKSSEIQTNFTADSDNEEEEVSLLHGHYNVNVSHPWIANLSTSFSLEVTKEMDQDQVIRVVISA.

The N-terminal stretch at 1 to 23 (MNSIKNGFFLCMIFLLWCHVDSG) is a signal peptide. 3 N-linked (GlcNAc...) asparagine glycosylation sites follow: Asn-197, Asn-261, and Asn-307. The 300-residue stretch at 202 to 501 (KGVVISLKQT…TQTGDVIDKL (300 aa)) folds into the GH10 domain. Glu-332 functions as the Proton donor in the catalytic mechanism. Residue Asn-346 is glycosylated (N-linked (GlcNAc...) asparagine). Glu-439 functions as the Nucleophile in the catalytic mechanism. Asn-490, Asn-515, Asn-537, and Asn-545 each carry an N-linked (GlcNAc...) asparagine glycan.

It belongs to the glycosyl hydrolase 10 (cellulase F) family.

It carries out the reaction Endohydrolysis of (1-&gt;4)-beta-D-xylosidic linkages in xylans.. It participates in glycan degradation; xylan degradation. In terms of biological role, binds to and hydrolyzes insoluble and soluble xylan substrates. The polypeptide is Endo-1,4-beta-xylanase 5-like (Arabidopsis thaliana (Mouse-ear cress)).